We begin with the raw amino-acid sequence, 79 residues long: Toxin ICK-20 (79 aa).

Positions 1–20 (MMKYFLVLCLVVLGVAAVQA) are cleaved as a signal peptide. Cystine bridges form between cysteine 43-cysteine 57, cysteine 50-cysteine 61, cysteine 56-cysteine 78, and cysteine 68-cysteine 74. The N-linked (GlcNAc...) asparagine glycan is linked to asparagine 71.

Belongs to the neurotoxin 13 (insecticidal toxin ABC) family. ICK-21 subfamily. Expressed by the venom gland.

The protein localises to the secreted. Functionally, ion channel inhibitor. The polypeptide is Toxin ICK-20 (Trittame loki (Brush-footed trapdoor spider)).